Reading from the N-terminus, the 299-residue chain is ATP phosphoribosyltransferase (299 aa).

Belongs to the ATP phosphoribosyltransferase family. Long subfamily. Requires Mg(2+) as cofactor.

The protein localises to the cytoplasm. The catalysed reaction is 1-(5-phospho-beta-D-ribosyl)-ATP + diphosphate = 5-phospho-alpha-D-ribose 1-diphosphate + ATP. It participates in amino-acid biosynthesis; L-histidine biosynthesis; L-histidine from 5-phospho-alpha-D-ribose 1-diphosphate: step 1/9. With respect to regulation, feedback inhibited by histidine. Functionally, catalyzes the condensation of ATP and 5-phosphoribose 1-diphosphate to form N'-(5'-phosphoribosyl)-ATP (PR-ATP). Has a crucial role in the pathway because the rate of histidine biosynthesis seems to be controlled primarily by regulation of HisG enzymatic activity. This Shewanella sediminis (strain HAW-EB3) protein is ATP phosphoribosyltransferase.